The primary structure comprises 156 residues: ATP synthase subunit b (156 aa).

The helical transmembrane segment at 12 to 32 threads the bilayer; that stretch reads VAFLIFVLFCMKFVWPPVIAA.

Belongs to the ATPase B chain family. F-type ATPases have 2 components, F(1) - the catalytic core - and F(0) - the membrane proton channel. F(1) has five subunits: alpha(3), beta(3), gamma(1), delta(1), epsilon(1). F(0) has three main subunits: a(1), b(2) and c(10-14). The alpha and beta chains form an alternating ring which encloses part of the gamma chain. F(1) is attached to F(0) by a central stalk formed by the gamma and epsilon chains, while a peripheral stalk is formed by the delta and b chains.

The protein localises to the cell inner membrane. Functionally, f(1)F(0) ATP synthase produces ATP from ADP in the presence of a proton or sodium gradient. F-type ATPases consist of two structural domains, F(1) containing the extramembraneous catalytic core and F(0) containing the membrane proton channel, linked together by a central stalk and a peripheral stalk. During catalysis, ATP synthesis in the catalytic domain of F(1) is coupled via a rotary mechanism of the central stalk subunits to proton translocation. Component of the F(0) channel, it forms part of the peripheral stalk, linking F(1) to F(0). The protein is ATP synthase subunit b of Pseudomonas fluorescens (strain Pf0-1).